The following is a 244-amino-acid chain: Kallikrein-6 (244 aa).

A signal peptide spans 1 to 16 (MKKLMVVLSLIAAAWA). The propeptide at 17–21 (EEQNK) is activation peptide. The Peptidase S1 domain occupies 22–242 (LVHGGPCDKT…YTNWIQKTIQ (221 aa)). Intrachain disulfides connect cysteine 28-cysteine 157, cysteine 47-cysteine 63, cysteine 131-cysteine 231, cysteine 138-cysteine 203, cysteine 168-cysteine 182, and cysteine 193-cysteine 218. Residues histidine 62 and aspartate 106 each act as charge relay system in the active site. An N-linked (GlcNAc...) asparagine glycan is attached at asparagine 134. The Charge relay system role is filled by serine 197.

Inactivated by autolytic cleavage after Arg-80. As to expression, in fluids, highest levels found in milk of lactating women followed by cerebrospinal fluid, nipple aspirate fluid and breast cyst fluid. Also found in serum, seminal plasma and some amniotic fluids and breast tumor cytosolic extracts. Not detected in urine. At the tissue level, highest concentrations found in glandular tissues such as salivary glands followed by lung, colon, fallopian tube, placenta, breast, pituitary and kidney. Not detected in skin, spleen, bone, thyroid, heart, ureter, liver, muscle, endometrium, testis, pancreas, seminal vesicle, ovary, adrenals and prostate. In brain, detected in gray matter neurons (at protein level). Colocalizes with pathological inclusions such as Lewy bodies and glial cytoplasmic inclusions. Overexpressed in primary breast tumors but not expressed in metastatic tumors.

The protein resides in the secreted. It is found in the nucleus. Its subcellular location is the nucleolus. It localises to the cytoplasm. The protein localises to the mitochondrion. The protein resides in the microsome. With respect to regulation, inhibited by a range of serine protease inhibitors including soybean trypsin inhibitor, benzamidine and serpins. Activated by a range of glycosaminoglycans including chondroitin sulfate, dermatan sulfate, heparan sulfate and heparin. In terms of biological role, serine protease which exhibits a preference for Arg over Lys in the substrate P1 position and for Ser or Pro in the P2 position. Shows activity against amyloid precursor protein, myelin basic protein, gelatin, casein and extracellular matrix proteins such as fibronectin, laminin, vitronectin and collagen. Degrades alpha-synuclein and prevents its polymerization, indicating that it may be involved in the pathogenesis of Parkinson disease and other synucleinopathies. May be involved in regulation of axon outgrowth following spinal cord injury. Tumor cells treated with a neutralizing KLK6 antibody migrate less than control cells, suggesting a role in invasion and metastasis. The polypeptide is Kallikrein-6 (KLK6) (Homo sapiens (Human)).